The sequence spans 232 residues: MPGWFKKAWYGLASLLSFSSFILIIVALVVPHWLSGKILCQTGVDLVNATDRELVKFIGDIYYGLFRGCKVRQCGLGGRQSQFTIFPHLVKELNAGLHVMILLLLFLALALALVSMGFAILNMIQVPYRAVSGPGGICLWNVLAGGVVALAIASFVAAVKFHDLTERIANFQEKLFQFVVVEEQYEESFWICVASASAHAANLVVVAISQIPLPEIKTKIEEATVTAEDILY.

A helical transmembrane segment spans residues Y10 to V30. Residue N48 is glycosylated (N-linked (GlcNAc...) asparagine). A run of 3 helical transmembrane segments spans residues I101–L121, L139–V159, and S188–I208.

It belongs to the clarin family.

The protein resides in the cell projection. Its subcellular location is the stereocilium membrane. In terms of biological role, plays a key role to hearing function. Required for normal organization and maintenance of the stereocilia bundle and for mechano-electrical transduction. This Homo sapiens (Human) protein is Clarin-2.